Reading from the N-terminus, the 506-residue chain is ATP synthase subunit alpha (506 aa).

169 to 176 serves as a coordination point for ATP; it reads GDRGTGKT.

The protein belongs to the ATPase alpha/beta chains family. In terms of assembly, F-type ATPases have 2 components, CF(1) - the catalytic core - and CF(0) - the membrane proton channel. CF(1) has five subunits: alpha(3), beta(3), gamma(1), delta(1), epsilon(1). CF(0) has three main subunits: a(1), b(2) and c(9-12). The alpha and beta chains form an alternating ring which encloses part of the gamma chain. CF(1) is attached to CF(0) by a central stalk formed by the gamma and epsilon chains, while a peripheral stalk is formed by the delta and b chains.

It is found in the cell membrane. The catalysed reaction is ATP + H2O + 4 H(+)(in) = ADP + phosphate + 5 H(+)(out). Produces ATP from ADP in the presence of a proton gradient across the membrane. The alpha chain is a regulatory subunit. In Symbiobacterium thermophilum (strain DSM 24528 / JCM 14929 / IAM 14863 / T), this protein is ATP synthase subunit alpha.